A 425-amino-acid chain; its full sequence is Histidinol dehydrogenase (425 aa).

The substrate site is built by Ser231, Gln253, and His256. 2 residues coordinate Zn(2+): Gln253 and His256. Catalysis depends on proton acceptor residues Glu321 and His322. Substrate is bound by residues His322, Asp355, Glu409, and His414. Asp355 is a Zn(2+) binding site. His414 lines the Zn(2+) pocket.

It belongs to the histidinol dehydrogenase family. It depends on Zn(2+) as a cofactor.

The enzyme catalyses L-histidinol + 2 NAD(+) + H2O = L-histidine + 2 NADH + 3 H(+). Its pathway is amino-acid biosynthesis; L-histidine biosynthesis; L-histidine from 5-phospho-alpha-D-ribose 1-diphosphate: step 9/9. Its function is as follows. Catalyzes the sequential NAD-dependent oxidations of L-histidinol to L-histidinaldehyde and then to L-histidine. The sequence is that of Histidinol dehydrogenase from Carboxydothermus hydrogenoformans (strain ATCC BAA-161 / DSM 6008 / Z-2901).